The chain runs to 186 residues: Transcription factor FapR (186 aa).

It belongs to the FapR family.

Functionally, transcriptional factor involved in regulation of membrane lipid biosynthesis by repressing genes involved in fatty acid and phospholipid metabolism. This is Transcription factor FapR from Staphylococcus epidermidis (strain ATCC 35984 / DSM 28319 / BCRC 17069 / CCUG 31568 / BM 3577 / RP62A).